A 340-amino-acid polypeptide reads, in one-letter code: MGSTGKIKIGINGFGRIGRLVARVALTRDDIELVGVNDPFISTDYMSYMFKYDSVHGKWKHHEVNVKDSKTLLFGEKSVAVFGCRNPEEIPWGEVGAEYVVESTGVFTDKEKASAHLKAGAKKVVISAPSKDAPMFVVGVNEHQYKSDVNIVSNASCTTNCLAPLAKVINDKFGIVEGLMTTVHSITATQKTVDGPSNKDWRGGRGAGFNIIPSSTGAAKAVGKVLPALNGKLTGMAFRVPTPDVSVVDLTVRLEKSATYDEIKAAIKAESEGNLKGILGYTEDAVVSTDFIGDSRSSIFDAQAGIALSDNFVKLVSWYDNEWGYSSRVVDLIVHMAATQ.

NAD(+)-binding positions include 16-17 (RI), Asp38, and Arg85. Residues 156 to 158 (SCT), Thr187, 216 to 217 (TG), and Arg239 contribute to the D-glyceraldehyde 3-phosphate site. The active-site Nucleophile is the Cys157. Asn321 provides a ligand contact to NAD(+).

The protein belongs to the glyceraldehyde-3-phosphate dehydrogenase family. Homotetramer.

Its subcellular location is the cytoplasm. The enzyme catalyses D-glyceraldehyde 3-phosphate + phosphate + NAD(+) = (2R)-3-phospho-glyceroyl phosphate + NADH + H(+). It functions in the pathway carbohydrate degradation; glycolysis; pyruvate from D-glyceraldehyde 3-phosphate: step 1/5. Functionally, key enzyme in glycolysis that catalyzes the first step of the pathway by converting D-glyceraldehyde 3-phosphate (G3P) into 3-phospho-D-glyceroyl phosphate. Essential for the maintenance of cellular ATP levels and carbohydrate metabolism. This is Glyceraldehyde-3-phosphate dehydrogenase, cytosolic (GAPC) from Pinus sylvestris (Scotch pine).